Consider the following 409-residue polypeptide: Ribose-phosphate pyrophosphokinase 1 (409 aa).

Mg(2+) is bound by residues Asp128, His130, and Asp143. Ser199 carries the post-translational modification Phosphoserine.

It belongs to the ribose-phosphate pyrophosphokinase family.

It is found in the cytoplasm. The enzyme catalyses D-ribose 5-phosphate + ATP = 5-phospho-alpha-D-ribose 1-diphosphate + AMP + H(+). The protein operates within metabolic intermediate biosynthesis; 5-phospho-alpha-D-ribose 1-diphosphate biosynthesis; 5-phospho-alpha-D-ribose 1-diphosphate from D-ribose 5-phosphate (route I): step 1/1. Its function is as follows. 5-phosphoribose 1-diphosphate synthase involved in nucleotide, histidine, and tryptophan biosynthesis. Active in heteromultimeric complexes with other 5-phosphoribose 1-diphosphate synthases. This chain is Ribose-phosphate pyrophosphokinase 1, found in Schizosaccharomyces pombe (strain 972 / ATCC 24843) (Fission yeast).